The chain runs to 279 residues: Acetylglutamate kinase (279 aa).

Substrate-binding positions include 64 to 65 (GG), Arg86, and Asn177.

The protein belongs to the acetylglutamate kinase family. ArgB subfamily.

The protein localises to the cytoplasm. The enzyme catalyses N-acetyl-L-glutamate + ATP = N-acetyl-L-glutamyl 5-phosphate + ADP. The protein operates within amino-acid biosynthesis; L-arginine biosynthesis; N(2)-acetyl-L-ornithine from L-glutamate: step 2/4. Functionally, catalyzes the ATP-dependent phosphorylation of N-acetyl-L-glutamate. In Campylobacter jejuni (strain RM1221), this protein is Acetylglutamate kinase.